Here is a 64-residue protein sequence, read N- to C-terminus: Disintegrin VLO5A (64 aa).

Positions 1 to 64 constitute a Disintegrin domain; it reads NSGNPCCDPV…SDCPRNPYKD (64 aa). Cystine bridges form between Cys-6–Cys-29, Cys-20–Cys-26, Cys-25–Cys-50, and Cys-38–Cys-57. A Cell attachment site; atypical (VGD) motif is present at residues 42–44; that stretch reads VGD.

The protein belongs to the venom metalloproteinase (M12B) family. P-II subfamily. P-IIe sub-subfamily. As to quaternary structure, heterodimer with VLO5B; disulfide-linked. In terms of tissue distribution, expressed by the venom gland.

It localises to the secreted. Poor inhibitor of platelet aggregation. The disintegrin inhibits the adhesion of the alpha-4/beta-1 (ITGA4/ITGB1) integrin to VCAM-1. Inhibition on alpha-IIb/beta-3 (ITGA2B/ITGB3) is low. This is Disintegrin VLO5A from Macrovipera lebetina obtusa (Levant blunt-nosed viper).